Here is a 190-residue protein sequence, read N- to C-terminus: MIGSLTGIIEEIYITYIILNVGNVGYIVHVSQRVLQTCKIGNNIKLYIETHVNRDNLTQLYGFLDKQEQDYMRMLITINGINYKTAMSILSKLSPEQIFSAVVSNNKNAFRGNGIGEKLAGRITTELQYKISKMPIEETLIIKEDDSLAALISLGYDKLKAFNAIQEIKSDFPNANIQEIIRKALQKLSQ.

Residues 1–64 (MIGSLTGIIE…DNLTQLYGFL (64 aa)) form a domain I region. Positions 65–142 (DKQEQDYMRM…KMPIEETLII (78 aa)) are domain II. Position 143 (K143) is a region of interest, flexible linker. The interval 143-190 (KEDDSLAALISLGYDKLKAFNAIQEIKSDFPNANIQEIIRKALQKLSQ) is domain III.

Belongs to the RuvA family. Homotetramer. Forms an RuvA(8)-RuvB(12)-Holliday junction (HJ) complex. HJ DNA is sandwiched between 2 RuvA tetramers; dsDNA enters through RuvA and exits via RuvB. An RuvB hexamer assembles on each DNA strand where it exits the tetramer. Each RuvB hexamer is contacted by two RuvA subunits (via domain III) on 2 adjacent RuvB subunits; this complex drives branch migration. In the full resolvosome a probable DNA-RuvA(4)-RuvB(12)-RuvC(2) complex forms which resolves the HJ.

It is found in the cytoplasm. The RuvA-RuvB-RuvC complex processes Holliday junction (HJ) DNA during genetic recombination and DNA repair, while the RuvA-RuvB complex plays an important role in the rescue of blocked DNA replication forks via replication fork reversal (RFR). RuvA specifically binds to HJ cruciform DNA, conferring on it an open structure. The RuvB hexamer acts as an ATP-dependent pump, pulling dsDNA into and through the RuvAB complex. HJ branch migration allows RuvC to scan DNA until it finds its consensus sequence, where it cleaves and resolves the cruciform DNA. In Ehrlichia canis (strain Jake), this protein is Holliday junction branch migration complex subunit RuvA.